The primary structure comprises 315 residues: Heme oxygenase 2 (315 aa).

Residues 1–12 (MSSEVETSEGVD) show a composition bias toward acidic residues. A disordered region spans residues 1–28 (MSSEVETSEGVDESEKNSMAPEKENHTK). S2 bears the N-acetylserine mark. S2 carries the phosphoserine modification. The Cytoplasmic portion of the chain corresponds to 2–294 (SSEVETSEGV…TTVAVLRKPS (293 aa)). A compositionally biased stretch (basic and acidic residues) spans 13–28 (ESEKNSMAPEKENHTK). Heme b contacts are provided by H44, Y153, K198, and R202. HRM repeat units lie at residues 263–268 (KCPFYA) and 280–285 (NCPFQT). Residues C264 and C281 each carry the S-nitrosocysteine modification. The chain crosses the membrane as a helical; Anchor for type IV membrane protein span at residues 295 to 315 (LQLILAASVALVAGLLAWYYM).

The protein belongs to the heme oxygenase family. Post-translationally, a soluble form arises by proteolytic removal of the membrane anchor. In terms of processing, S-nitrosylated by BLVRB. As to expression, ubiquitous.

It is found in the microsome membrane. It localises to the endoplasmic reticulum membrane. It carries out the reaction heme b + 3 reduced [NADPH--hemoprotein reductase] + 3 O2 = biliverdin IXalpha + CO + Fe(2+) + 3 oxidized [NADPH--hemoprotein reductase] + 3 H2O + H(+). Catalyzes the oxidative cleavage of heme at the alpha-methene bridge carbon, released as carbon monoxide (CO), to generate biliverdin IXalpha, while releasing the central heme iron chelate as ferrous iron. This is Heme oxygenase 2 (Hmox2) from Mus musculus (Mouse).